Reading from the N-terminus, the 130-residue chain is MSMQDPIADMLTRIRNGQAANKVAISMPSSKLKVAIASVLAEEGYVESFKVVEGSKPELEITLKYFQNKPVVESIQRVSRPGLRIYKRKDELPKVMGGLGIAVVSTSKGVMTDRAARQASLGGEIICYVA.

It belongs to the universal ribosomal protein uS8 family. Part of the 30S ribosomal subunit. Contacts proteins S5 and S12.

In terms of biological role, one of the primary rRNA binding proteins, it binds directly to 16S rRNA central domain where it helps coordinate assembly of the platform of the 30S subunit. This is Small ribosomal subunit protein uS8 from Glaesserella parasuis serovar 5 (strain SH0165) (Haemophilus parasuis).